A 191-amino-acid polypeptide reads, in one-letter code: Lipid A 1-phosphatase (191 aa).

The next 5 helical transmembrane spans lie at 22–42, 60–80, 117–137, 145–162, and 164–184; these read LLALSLGLILLGVFIPFPKVP, FIPTILSVAIPLIQRDAVGLF, GNFNMPSGHSSMVGLAVAFLM, YLWLLPLIPLTMLARIYL, and MHTIGAVLAGLGTGMLCVGLF.

Belongs to the lipid A LpxE 1-phosphatase family.

The protein localises to the cell inner membrane. It functions in the pathway bacterial outer membrane biogenesis; LPS lipid A biosynthesis. Its function is as follows. Removes the 1-phosphate group from tetra- and probably hexaacylated lipid A species. Absence of the 1-phosphate group renders the bacteria partially resistant to host-derived cationic antimicrobial peptides (CAMP), allowing it to camouflage itself from the host innate immune response, and plays a role in the long-term colonization of the host's stomach. The chain is Lipid A 1-phosphatase from Helicobacter pylori (strain J99 / ATCC 700824) (Campylobacter pylori J99).